A 115-amino-acid chain; its full sequence is Putative UPF0320 protein YKL225W (115 aa).

It belongs to the UPF0320 family.

The protein is Putative UPF0320 protein YKL225W of Saccharomyces cerevisiae (strain ATCC 204508 / S288c) (Baker's yeast).